The primary structure comprises 403 residues: S-adenosylmethionine synthase (403 aa).

His-17 is an ATP binding site. Asp-19 contributes to the Mg(2+) binding site. Glu-45 contacts K(+). The L-methionine site is built by Glu-58 and Gln-101. The flexible loop stretch occupies residues 101–111; it reads QSPDIAMGVDR. Residues 177 to 179, 244 to 245, Asp-253, 259 to 260, Ala-276, and Lys-280 contribute to the ATP site; these read DGK, RF, and RK. Asp-253 is an L-methionine binding site. Position 284 (Lys-284) interacts with L-methionine.

It belongs to the AdoMet synthase family. In terms of assembly, homotetramer; dimer of dimers. The cofactor is Mg(2+). Requires K(+) as cofactor.

Its subcellular location is the cytoplasm. The enzyme catalyses L-methionine + ATP + H2O = S-adenosyl-L-methionine + phosphate + diphosphate. The protein operates within amino-acid biosynthesis; S-adenosyl-L-methionine biosynthesis; S-adenosyl-L-methionine from L-methionine: step 1/1. Functionally, catalyzes the formation of S-adenosylmethionine (AdoMet) from methionine and ATP. The overall synthetic reaction is composed of two sequential steps, AdoMet formation and the subsequent tripolyphosphate hydrolysis which occurs prior to release of AdoMet from the enzyme. The sequence is that of S-adenosylmethionine synthase from Geobacillus kaustophilus (strain HTA426).